The primary structure comprises 419 residues: 20-hydroxy-prefusarin hydrolase FUS2 (419 aa).

The active site involves Ser238.

This sequence belongs to the AB hydrolase superfamily. FUS2 hydrolase family.

It participates in mycotoxin biosynthesis. 20-hydroxy-prefusarin hydrolase; part of the gene cluster that mediates the biosynthesis of the mycotoxin fusarin C. Within the cluster, FUS1, FUS2, FUS8 and FUS9 are sufficient for fusarin production. The roles of the other FUS members are yet undetermined. The fusarin C synthetase FUS1 is responsible for the condensation of one acetyl-coenzyme A (CoA) unit with six malonyl-CoA units and the amide linkage of the arising heptaketide and homoserine, subsequently releasing the first intermediate, prefusarin, as an alcohol with an open ring structure. The cytochrome P450 monooxygenase FUS8 participates in multiple oxidation processes at carbon C-20 and is able to use the FUS1 product as substrate, resulting in formation of 20-hydroxy-prefusarin. This reaction seems to be essential before the 2-pyrrolidone ring closure can be catalyzed by FUS2, generating 20-hydroxy-fusarin. FUS8 is able to further oxidizes carbon C-20 after ring closure, resulting in the formation of carboxy-fusarin C. As the last step, FUS9 methylates the hydroxyl group at C-21 to generate fusarin C. Fusarin C can then rearrange to epi-fusarin C, the (z)-isomers, and fusarin A and fusarin D. The polypeptide is 20-hydroxy-prefusarin hydrolase FUS2 (Gibberella moniliformis (strain M3125 / FGSC 7600) (Maize ear and stalk rot fungus)).